Here is a 262-residue protein sequence, read N- to C-terminus: Pyridoxine 5'-phosphate synthase (262 aa).

Asn-6 lines the 3-amino-2-oxopropyl phosphate pocket. A 1-deoxy-D-xylulose 5-phosphate-binding site is contributed by 8–9 (DH). Arg-17 serves as a coordination point for 3-amino-2-oxopropyl phosphate. His-42 acts as the Proton acceptor in catalysis. 1-deoxy-D-xylulose 5-phosphate contacts are provided by Arg-44 and His-49. Glu-69 acts as the Proton acceptor in catalysis. A 1-deoxy-D-xylulose 5-phosphate-binding site is contributed by Thr-99. His-213 (proton donor) is an active-site residue. 3-amino-2-oxopropyl phosphate-binding positions include Gly-214 and 235-236 (GH).

It belongs to the PNP synthase family. In terms of assembly, homooctamer; tetramer of dimers.

It localises to the cytoplasm. It catalyses the reaction 3-amino-2-oxopropyl phosphate + 1-deoxy-D-xylulose 5-phosphate = pyridoxine 5'-phosphate + phosphate + 2 H2O + H(+). It functions in the pathway cofactor biosynthesis; pyridoxine 5'-phosphate biosynthesis; pyridoxine 5'-phosphate from D-erythrose 4-phosphate: step 5/5. Catalyzes the complicated ring closure reaction between the two acyclic compounds 1-deoxy-D-xylulose-5-phosphate (DXP) and 3-amino-2-oxopropyl phosphate (1-amino-acetone-3-phosphate or AAP) to form pyridoxine 5'-phosphate (PNP) and inorganic phosphate. The sequence is that of Pyridoxine 5'-phosphate synthase from Wolinella succinogenes (strain ATCC 29543 / DSM 1740 / CCUG 13145 / JCM 31913 / LMG 7466 / NCTC 11488 / FDC 602W) (Vibrio succinogenes).